The primary structure comprises 371 residues: Bifunctional enzyme IspD/IspF (371 aa).

The tract at residues 1–212 is 2-C-methyl-D-erythritol 4-phosphate cytidylyltransferase; sequence MKDITLVLLA…FDFTPASGTI (212 aa). A 2-C-methyl-D-erythritol 2,4-cyclodiphosphate synthase region spans residues 213 to 371; it reads FTGNGFDVHA…NLGYFDWRKF (159 aa). Positions 219 and 221 each coordinate a divalent metal cation. 4-CDP-2-C-methyl-D-erythritol 2-phosphate is bound by residues 219 to 221 and 245 to 246; these read DVH and HS. Residue histidine 253 coordinates a divalent metal cation. 4-CDP-2-C-methyl-D-erythritol 2-phosphate contacts are provided by residues 267 to 269, 272 to 276, 341 to 344, phenylalanine 348, and arginine 351; these read DIG, FPDTD, and STTE.

It in the N-terminal section; belongs to the IspD/TarI cytidylyltransferase family. IspD subfamily. In the C-terminal section; belongs to the IspF family. A divalent metal cation serves as cofactor.

It catalyses the reaction 2-C-methyl-D-erythritol 4-phosphate + CTP + H(+) = 4-CDP-2-C-methyl-D-erythritol + diphosphate. It carries out the reaction 4-CDP-2-C-methyl-D-erythritol 2-phosphate = 2-C-methyl-D-erythritol 2,4-cyclic diphosphate + CMP. The protein operates within isoprenoid biosynthesis; isopentenyl diphosphate biosynthesis via DXP pathway; isopentenyl diphosphate from 1-deoxy-D-xylulose 5-phosphate: step 2/6. Its pathway is isoprenoid biosynthesis; isopentenyl diphosphate biosynthesis via DXP pathway; isopentenyl diphosphate from 1-deoxy-D-xylulose 5-phosphate: step 4/6. Its function is as follows. Bifunctional enzyme that catalyzes the formation of 4-diphosphocytidyl-2-C-methyl-D-erythritol from CTP and 2-C-methyl-D-erythritol 4-phosphate (MEP) (IspD), and catalyzes the conversion of 4-diphosphocytidyl-2-C-methyl-D-erythritol 2-phosphate (CDP-ME2P) to 2-C-methyl-D-erythritol 2,4-cyclodiphosphate (ME-CPP) with a corresponding release of cytidine 5-monophosphate (CMP) (IspF). This is Bifunctional enzyme IspD/IspF from Campylobacter hominis (strain ATCC BAA-381 / DSM 21671 / CCUG 45161 / LMG 19568 / NCTC 13146 / CH001A).